The primary structure comprises 356 residues: Peptide chain release factor 1 (356 aa).

Glutamine 233 bears the N5-methylglutamine mark.

This sequence belongs to the prokaryotic/mitochondrial release factor family. Methylated by PrmC. Methylation increases the termination efficiency of RF1.

Its subcellular location is the cytoplasm. Functionally, peptide chain release factor 1 directs the termination of translation in response to the peptide chain termination codons UAG and UAA. The protein is Peptide chain release factor 1 of Symbiobacterium thermophilum (strain DSM 24528 / JCM 14929 / IAM 14863 / T).